Here is a 195-residue protein sequence, read N- to C-terminus: Thymidine kinase (195 aa).

Residues 15–22 (GPMYSGKS), Glu23, 57–58 (SH), and 88–91 (DEVQ) each bind ATP. The active-site Proton acceptor is Glu89. A substrate-binding site is contributed by Phe120. Zn(2+) contacts are provided by Cys145 and Cys148. Tyr179 lines the substrate pocket. Zn(2+)-binding residues include Cys183 and Cys186.

The protein belongs to the thymidine kinase family.

It is found in the cytoplasm. It carries out the reaction thymidine + ATP = dTMP + ADP + H(+). This chain is Thymidine kinase, found in Clostridium acetobutylicum (strain ATCC 824 / DSM 792 / JCM 1419 / IAM 19013 / LMG 5710 / NBRC 13948 / NRRL B-527 / VKM B-1787 / 2291 / W).